We begin with the raw amino-acid sequence, 242 residues long: Biosynthetic peptidoglycan transglycosylase (242 aa).

The chain crosses the membrane as a helical span at residues 12–32 (LLLWLIALSVLLVLLLRWVPP).

It belongs to the glycosyltransferase 51 family.

It is found in the cell inner membrane. It catalyses the reaction [GlcNAc-(1-&gt;4)-Mur2Ac(oyl-L-Ala-gamma-D-Glu-L-Lys-D-Ala-D-Ala)](n)-di-trans,octa-cis-undecaprenyl diphosphate + beta-D-GlcNAc-(1-&gt;4)-Mur2Ac(oyl-L-Ala-gamma-D-Glu-L-Lys-D-Ala-D-Ala)-di-trans,octa-cis-undecaprenyl diphosphate = [GlcNAc-(1-&gt;4)-Mur2Ac(oyl-L-Ala-gamma-D-Glu-L-Lys-D-Ala-D-Ala)](n+1)-di-trans,octa-cis-undecaprenyl diphosphate + di-trans,octa-cis-undecaprenyl diphosphate + H(+). It functions in the pathway cell wall biogenesis; peptidoglycan biosynthesis. Peptidoglycan polymerase that catalyzes glycan chain elongation from lipid-linked precursors. This Stutzerimonas stutzeri (strain A1501) (Pseudomonas stutzeri) protein is Biosynthetic peptidoglycan transglycosylase.